We begin with the raw amino-acid sequence, 347 residues long: 2-hydroxyacid dehydrogenase A (347 aa).

Residues 157 to 158 (RI), Asp-177, 234 to 236 (TSR), and Asp-260 contribute to the NAD(+) site. Residue Arg-236 is part of the active site. The active site involves Glu-265.

Belongs to the D-isomer specific 2-hydroxyacid dehydrogenase family.

It carries out the reaction a (2R)-2-hydroxycarboxylate + NADP(+) = a 2-oxocarboxylate + NADPH + H(+). In terms of biological role, 2-hydroxyacid dehydrogenase that is capable to reduce pyruvate, hydroxypyruvate and glyoxylate in a NADPH- or NADH-dependent manner. In contrast to 2-HadhD/morA, does not recognize 4-methyl-2-oxopentanoate (MOA) as a substrate. This is 2-hydroxyacid dehydrogenase A from Aspergillus oryzae (strain ATCC 42149 / RIB 40) (Yellow koji mold).